Consider the following 276-residue polypeptide: Beta-lactamase OXA-1 (276 aa).

The N-terminal stretch at 1–25 is a signal peptide; the sequence is MKNTIHINFAIFLIIANIIYSSASA. Serine 71 (acyl-ester intermediate) is an active-site residue. Positions 71, 74, 118, 216, and 218 each coordinate a beta-lactam. Lysine 74 carries the N6-carboxylysine modification.

Belongs to the class-D beta-lactamase family. As to quaternary structure, monomer.

The protein localises to the periplasm. The catalysed reaction is a beta-lactam + H2O = a substituted beta-amino acid. Inhibited by penicillin sulfones. Only weakly inhibited by clavulanic acid and sulbactam. Its function is as follows. Class D beta-lactamase which confers resistance to the beta-lactam antibiotics, including amoxicillin and ticarcillin. Acts via hydrolysis of the beta-lactam ring. Has penicillin- and cephalosporin-hydrolyzing activities. The polypeptide is Beta-lactamase OXA-1 (Escherichia coli).